A 178-amino-acid chain; its full sequence is MDLLLLLFSAIWYILPAYIANAVPCILGGGRPVDFGKNFFDGYRLIGNGVTYRGTFFGILFGIITGILQHFIVILYMDPESAFNYGLSGYIILSFLLATGALFGDMLGSFIKRRFKLNQGQSAPLLDQITFIVFALLFAYPFYPLPINTIILLLVISPLIHLSSNIVAYKLHLKKVWW.

Helical transmembrane passes span 3–23, 56–76, 91–111, and 136–156; these read LLLL…ANAV, FFGI…VILY, IILS…GSFI, and LLFA…LLVI.

It belongs to the CDP-archaeol synthase family. It depends on Mg(2+) as a cofactor.

It is found in the cell membrane. It catalyses the reaction 2,3-bis-O-(geranylgeranyl)-sn-glycerol 1-phosphate + CTP + H(+) = CDP-2,3-bis-O-(geranylgeranyl)-sn-glycerol + diphosphate. The protein operates within membrane lipid metabolism; glycerophospholipid metabolism. Functionally, catalyzes the formation of CDP-2,3-bis-(O-geranylgeranyl)-sn-glycerol (CDP-archaeol) from 2,3-bis-(O-geranylgeranyl)-sn-glycerol 1-phosphate (DGGGP) and CTP. This reaction is the third ether-bond-formation step in the biosynthesis of archaeal membrane lipids. The chain is CDP-archaeol synthase from Methanococcus maripaludis (strain C5 / ATCC BAA-1333).